A 115-amino-acid polypeptide reads, in one-letter code: NAD(P)H-quinone oxidoreductase subunit M (115 aa).

This sequence belongs to the complex I NdhM subunit family. In terms of assembly, NDH-1 can be composed of about 15 different subunits; different subcomplexes with different compositions have been identified which probably have different functions.

The protein localises to the cellular thylakoid membrane. It carries out the reaction a plastoquinone + NADH + (n+1) H(+)(in) = a plastoquinol + NAD(+) + n H(+)(out). It catalyses the reaction a plastoquinone + NADPH + (n+1) H(+)(in) = a plastoquinol + NADP(+) + n H(+)(out). Functionally, NDH-1 shuttles electrons from an unknown electron donor, via FMN and iron-sulfur (Fe-S) centers, to quinones in the respiratory and/or the photosynthetic chain. The immediate electron acceptor for the enzyme in this species is believed to be plastoquinone. Couples the redox reaction to proton translocation, and thus conserves the redox energy in a proton gradient. Cyanobacterial NDH-1 also plays a role in inorganic carbon-concentration. This chain is NAD(P)H-quinone oxidoreductase subunit M, found in Prochlorococcus marinus (strain AS9601).